The sequence spans 62 residues: MGVPKKRTSKMRRDRRRAANNNLRSAVQVTKCPNCKEPVMPHRACTSCGQYKGREVVAQAEA.

The segment covering 1-18 (MGVPKKRTSKMRRDRRRA) has biased composition (basic residues). The segment at 1–22 (MGVPKKRTSKMRRDRRRAANNN) is disordered.

The protein belongs to the bacterial ribosomal protein bL32 family.

This Myxococcus xanthus (strain DK1622) protein is Large ribosomal subunit protein bL32.